The chain runs to 227 residues: MNNYLLKCENINKFYQEGENQTQVLKGVSFSMEPAELVAIVGSSGSGKSTLLHTLGGLDQPSSGEVFINGQSLQKASANELAALRNRYLGFVYQFHHLMADFTALENVMMPMLIGHQNKTEAKDRAEKMLSAVGLSHRITHRPSALSGGERQRVAIARALVNNPSLVLADEPTGNLDHKTTESIFELIQQLNQEQNIAFLLVTHDMGLAEKLSRRLVMQDGLLKEGA.

The ABC transporter domain maps to 6 to 227 (LKCENINKFY…MQDGLLKEGA (222 aa)). Residue 42–49 (GSSGSGKS) coordinates ATP.

It belongs to the ABC transporter superfamily. Lipoprotein translocase (TC 3.A.1.125) family. As to quaternary structure, the complex is composed of two ATP-binding proteins (LolD) and two transmembrane proteins (LolC and LolE).

Its subcellular location is the cell inner membrane. Part of the ABC transporter complex LolCDE involved in the translocation of mature outer membrane-directed lipoproteins, from the inner membrane to the periplasmic chaperone, LolA. Responsible for the formation of the LolA-lipoprotein complex in an ATP-dependent manner. This chain is Lipoprotein-releasing system ATP-binding protein LolD, found in Haemophilus influenzae (strain 86-028NP).